A 30-amino-acid chain; its full sequence is Chassatide C9 (30 aa).

The segment at residues 1–30 is a cross-link (cyclopeptide (Gly-Asn)); it reads GIPCGESCVFIPCVTTVIGCSCKDKVCYNN. 3 disulfides stabilise this stretch: cysteine 4/cysteine 20, cysteine 8/cysteine 22, and cysteine 13/cysteine 27.

In terms of processing, this is a cyclic peptide.

Functionally, probably participates in a plant defense mechanism. This chain is Chassatide C9, found in Chassalia chartacea (Chassalia curviflora).